Here is a 370-residue protein sequence, read N- to C-terminus: Maturase K (370 aa).

The protein belongs to the intron maturase 2 family. MatK subfamily.

The protein localises to the plastid. The protein resides in the chloroplast. In terms of biological role, usually encoded in the trnK tRNA gene intron. Probably assists in splicing its own and other chloroplast group II introns. This chain is Maturase K, found in Marchantia polymorpha (Common liverwort).